The primary structure comprises 197 residues: dTTP/UTP pyrophosphatase (197 aa).

The active-site Proton acceptor is the Asp70.

It belongs to the Maf family. YhdE subfamily. In terms of assembly, homodimer. Can also form homotetramers. A divalent metal cation serves as cofactor.

It is found in the cytoplasm. It carries out the reaction dTTP + H2O = dTMP + diphosphate + H(+). The enzyme catalyses UTP + H2O = UMP + diphosphate + H(+). It catalyses the reaction 5-methyl-UTP + H2O = 5-methyl-UMP + diphosphate + H(+). The catalysed reaction is psi-UTP + H2O = psi-UMP + diphosphate + H(+). It carries out the reaction 5-methyl-CTP + H2O = 5-methyl-CMP + diphosphate + H(+). Functionally, nucleoside triphosphate pyrophosphatase that hydrolyzes dTTP and UTP. Can also hydrolyze TTP and the modified nucleotides 5-methyl-UTP (m(5)UTP), pseudo-UTP and 5-methyl-CTP (m(5)CTP). Has weak activity with CTP. May have a dual role in cell division arrest and in preventing the incorporation of modified nucleotides into cellular nucleic acids. Important in maintenance of cell shape. This chain is dTTP/UTP pyrophosphatase (yhdE), found in Escherichia coli (strain K12).